Here is a 191-residue protein sequence, read N- to C-terminus: Orotate phosphoribosyltransferase (191 aa).

Residue 114-122 (EDVVTTGKS) coordinates 5-phospho-alpha-D-ribose 1-diphosphate. Positions 118 and 146 each coordinate orotate.

Belongs to the purine/pyrimidine phosphoribosyltransferase family. PyrE subfamily. Homodimer. Requires Mg(2+) as cofactor.

It carries out the reaction orotidine 5'-phosphate + diphosphate = orotate + 5-phospho-alpha-D-ribose 1-diphosphate. It functions in the pathway pyrimidine metabolism; UMP biosynthesis via de novo pathway; UMP from orotate: step 1/2. In terms of biological role, catalyzes the transfer of a ribosyl phosphate group from 5-phosphoribose 1-diphosphate to orotate, leading to the formation of orotidine monophosphate (OMP). This Clostridium botulinum (strain Kyoto / Type A2) protein is Orotate phosphoribosyltransferase.